Here is a 165-residue protein sequence, read N- to C-terminus: MLKIRLARGGAKKRPYYSIVVADSHSPRDGRFIEKVGTYNPLLKKDDANRVTLKVESIQEWLKKGAQPTDRVARFLAAQGLVAWTHGNNPEKGKPGKKAQERLAERAQREEERKQAEADAKAAAEAEKAAAAEAAAAAAAAPAVEEAPAEEAPAAEAPAEEAAEG.

Residues 84–165 (WTHGNNPEKG…EAPAEEAAEG (82 aa)) are disordered. Basic and acidic residues predominate over residues 89–130 (NPEKGKPGKKAQERLAERAQREEERKQAEADAKAAAEAEKAA). Positions 131–157 (AAEAAAAAAAAPAVEEAPAEEAPAAEA) are enriched in low complexity.

It belongs to the bacterial ribosomal protein bS16 family.

The sequence is that of Small ribosomal subunit protein bS16 from Caulobacter vibrioides (strain ATCC 19089 / CIP 103742 / CB 15) (Caulobacter crescentus).